The primary structure comprises 475 residues: Ribulose bisphosphate carboxylase large chain (475 aa).

The propeptide occupies 1 to 2; it reads MS. N-acetylproline is present on proline 3. Lysine 14 is modified (N6,N6,N6-trimethyllysine). Substrate-binding residues include asparagine 123 and threonine 173. Lysine 175 serves as the catalytic Proton acceptor. Lysine 177 provides a ligand contact to substrate. The Mg(2+) site is built by lysine 201, aspartate 203, and glutamate 204. Lysine 201 is subject to N6-carboxylysine. The Proton acceptor role is filled by histidine 294. Residues arginine 295, histidine 327, and serine 379 each contribute to the substrate site.

It belongs to the RuBisCO large chain family. Type I subfamily. Heterohexadecamer of 8 large chains and 8 small chains; disulfide-linked. The disulfide link is formed within the large subunit homodimers. The cofactor is Mg(2+). The disulfide bond which can form in the large chain dimeric partners within the hexadecamer appears to be associated with oxidative stress and protein turnover.

The protein localises to the plastid. It localises to the chloroplast. It catalyses the reaction 2 (2R)-3-phosphoglycerate + 2 H(+) = D-ribulose 1,5-bisphosphate + CO2 + H2O. The enzyme catalyses D-ribulose 1,5-bisphosphate + O2 = 2-phosphoglycolate + (2R)-3-phosphoglycerate + 2 H(+). Functionally, ruBisCO catalyzes two reactions: the carboxylation of D-ribulose 1,5-bisphosphate, the primary event in carbon dioxide fixation, as well as the oxidative fragmentation of the pentose substrate in the photorespiration process. Both reactions occur simultaneously and in competition at the same active site. In Populus tremuloides (Quaking aspen), this protein is Ribulose bisphosphate carboxylase large chain.